A 414-amino-acid polypeptide reads, in one-letter code: Cell division protein FtsA (414 aa).

It belongs to the FtsA/MreB family. Self-interacts. Interacts with FtsZ.

It is found in the cell inner membrane. Its function is as follows. Cell division protein that is involved in the assembly of the Z ring. May serve as a membrane anchor for the Z ring. In Neisseria meningitidis serogroup B (strain ATCC BAA-335 / MC58), this protein is Cell division protein FtsA.